We begin with the raw amino-acid sequence, 274 residues long: Large ribosomal subunit protein uL2 (274 aa).

A disordered region spans residues Ala224–Tyr256. A compositionally biased stretch (basic and acidic residues) spans Asp229 to Val246.

Belongs to the universal ribosomal protein uL2 family. Part of the 50S ribosomal subunit. Forms a bridge to the 30S subunit in the 70S ribosome.

In terms of biological role, one of the primary rRNA binding proteins. Required for association of the 30S and 50S subunits to form the 70S ribosome, for tRNA binding and peptide bond formation. It has been suggested to have peptidyltransferase activity; this is somewhat controversial. Makes several contacts with the 16S rRNA in the 70S ribosome. This chain is Large ribosomal subunit protein uL2, found in Acidovorax sp. (strain JS42).